The primary structure comprises 272 residues: Ingression protein fic1 (272 aa).

A C2 domain is found at 1 to 107 (MSKNPLGTLV…MKEELQSEWY (107 aa)). The segment at 155-187 (VPKKPSKPSKPRKKVPVSHPLPPTPPSREEHVS) is disordered. The span at 158-170 (KPSKPSKPRKKVP) shows a compositional bias: basic residues.

This sequence belongs to the INN1/fic1 family. As to quaternary structure, interacts with cdc15 and imp2.

The protein resides in the cytoplasm. It is found in the nucleus. Its function is as follows. Involved in the ingression of the plasma membrane during cytokinesis, leading to the separation of the daughter cells. Unlike its S.cerevisiae ortholog INN1, it does not play an essential role, probably because the actinomyosin ring is connected to the cell cortex by many more proteins. The protein is Ingression protein fic1 (fic1) of Schizosaccharomyces pombe (strain 972 / ATCC 24843) (Fission yeast).